The following is a 593-amino-acid chain: PiggyBac transposable element-derived protein 3 (593 aa).

2 disordered regions span residues 27 to 53 (IQPP…INNL) and 69 to 105 (SDAE…SRRR). The span at 38-47 (SDEESGDEEG) shows a compositional bias: acidic residues. A Phosphoserine modification is found at S86.

Expressed in heart and oocytes, but not in granulosa cells (at protein level).

The protein resides in the nucleus. In terms of biological role, binds in vitro to PGBD3-related transposable elements, called MER85s; these non-autonomous 140 bp elements are characterized by the presence of PGBD3 terminal inverted repeats and the absence of internal transposase ORF. This Homo sapiens (Human) protein is PiggyBac transposable element-derived protein 3 (PGBD3).